Here is a 395-residue protein sequence, read N- to C-terminus: Serine/threonine-protein kinase BIK1 (395 aa).

Residue glycine 2 is the site of N-myristoyl glycine attachment. Cysteine 4 carries S-palmitoyl cysteine lipidation. Phosphoserine is present on serine 26. Lysine 31 participates in a covalent cross-link: Glycyl lysine isopeptide (Lys-Gly) (interchain with G-Cter in ubiquitin). Phosphoserine occurs at positions 32, 33, and 34. Position 35 is a phosphothreonine (threonine 35). Lysine 41 participates in a covalent cross-link: Glycyl lysine isopeptide (Lys-Gly) (interchain with G-Cter in ubiquitin). The residue at position 42 (threonine 42) is a Phosphothreonine. Serine 48 carries the phosphoserine; by autocatalysis and BAK1 modification. Threonine 50 is subject to Phosphothreonine. Serine 54 carries the post-translational modification Phosphoserine; by autocatalysis. Threonine 56 is modified (phosphothreonine; by autocatalysis). A Phosphothreonine modification is found at threonine 64. In terms of domain architecture, Protein kinase spans 67–356 (FRPDSVIGEG…RALQQLQDNL (290 aa)). The residue at position 71 (serine 71) is a Phosphoserine; by autocatalysis and BAK1. ATP is bound at residue 73-81 (IGEGGFGCV). Position 89 is a phosphoserine; by EFR (serine 89). A Required for physical interaction with and phosphorylation of downstream signaling proteins (e.g. WRKY33, WRKY50, WRKY51 and WRKY57) to activate EFR-mediated immune signaling motif is present at residues 89 to 90 (ST). The residue at position 90 (threonine 90) is a Phosphothreonine; by EFR. Lysine 95 participates in a covalent cross-link: Glycyl lysine isopeptide (Lys-Gly) (interchain with G-Cter in ubiquitin). Lysine 105 contacts ATP. Threonine 120 is subject to Phosphothreonine; by EFR. Serine 129 is modified (phosphoserine; by autocatalysis). At serine 129 the chain carries Phosphoserine; by EFR. A Phosphotyrosine modification is found at tyrosine 150. At tyrosine 168 the chain carries Phosphotyrosine; by autocatalysis. Residues lysine 170 and lysine 186 each participate in a glycyl lysine isopeptide (Lys-Gly) (interchain with G-Cter in ubiquitin) cross-link. Serine 193 is subject to Phosphoserine. Aspartate 202 functions as the Proton acceptor in the catalytic mechanism. Position 206 is a phosphoserine; by autocatalysis and BAK1 (serine 206). The residue at position 214 (tyrosine 214) is a Phosphotyrosine; by autocatalysis. Residue serine 219 is modified to Phosphoserine. Serine 233 bears the Phosphoserine; by autocatalysis mark. Serine 236 is subject to O-UMP-serine; by Xanthomonas campestris effector XopAC/AvrAC; alternate. Serine 236 is subject to Phosphoserine; by autocatalysis and BAK1; alternate. Threonine 237 carries the post-translational modification O-UMP-threonine; by Xanthomonas campestris effector XopAC/AvrAC; alternate. The residue at position 237 (threonine 237) is a Phosphothreonine; by autocatalysis and BAK1; alternate. The residue at position 242 (threonine 242) is a Phosphothreonine; by autocatalysis and BAK1. Tyrosine 243 is modified (phosphotyrosine). Phosphotyrosine; by autocatalysis is present on tyrosine 250. Serine 252 and serine 253 each carry phosphoserine; by autocatalysis. Lysine 286 is covalently cross-linked (Glycyl lysine isopeptide (Lys-Gly) (interchain with G-Cter in ubiquitin)). At threonine 314 the chain carries Phosphothreonine; by autocatalysis. Residue lysine 337 forms a Glycyl lysine isopeptide (Lys-Gly) (interchain with G-Cter in ubiquitin) linkage. Residue threonine 341 is modified to Phosphothreonine. Polar residues predominate over residues 354–365 (DNLGKPSQTNPV). Residues 354–395 (DNLGKPSQTNPVKDTKKLGFKTGTTKSSEKRFTQKPFGRHLV) form a disordered region. Residue lysine 358 forms a Glycyl lysine isopeptide (Lys-Gly) (interchain with G-Cter in ubiquitin) linkage. Serine 360 bears the Phosphoserine; by autocatalysis and BAK1 mark. Threonine 362 is subject to Phosphothreonine; by autocatalysis and BAK1. Lysine 366 is covalently cross-linked (Glycyl lysine isopeptide (Lys-Gly) (interchain with G-Cter in ubiquitin)). Threonine 368 is modified (phosphothreonine; by autocatalysis and BAK1). Phosphothreonine occurs at positions 375 and 377.

This sequence belongs to the protein kinase superfamily. Ser/Thr protein kinase family. As to quaternary structure, interacts with FLS2. Activation of FLS2 by flagellin (flg22) induces the dissociation of the complex. Interacts with BAK1. Interacts with the Xanthomonas campestris effector XopAC/AvrAC. Interacts with CPK28. Interacts with PEPR1. Interacts with PP2C38. Interacts with BRI1. Interacts with RBOHD. Binds to EFR when not phosphorylated at Ser-89 and Thr-90, in the absence of pathogen elicitor; dissociates upon pathogen-associated molecular pattern (PAMP)-triggered activation by EFR-mediated phosphorylation. Interacts directly with and phosphorylates WRKY transcription factors in the nucleus involved in the jasmonic acid (JA) and salicylic acid (SA) regulation (e.g. WRKY33, WRKY50, WRKY51 and WRKY57) to modulate defense hormones during plant immunity. Binds to ATL44/RHA3A and ATL45/RHA3B. Binds to SIK1 to be phosphorylated and stabilized. Phosphorylated by SIK1 to be stabilized. Phosphorylated by FLS2 and BAK1. Autophosphorylated. Autophosphorylation is reduced in presence of the Xanthomonas campestris effector XopAC/AvrAC. Phosphorylated, especially by EFR at Ser-89 and Thr-90, in response to the microbe-associated molecular pattern (MAMP) flg22. Phosphorylation in response to flg22 is abolished in presence of the Xanthomonas campestris effector XopAC/AvrAC. Phosphorylated at Ser-233, Ser-236 and Thr-237 by PEPR1. Phosphorylated at Tyr-150, Tyr-243 and Tyr-250. Tyrosine phosphorylation is required for BIK1 function in plant innate immunity. In terms of processing, uridylylated at Ser-236 and Thr-237 by the Xanthomonas campestris effector XopAC/AvrAC. This conceals conserved phosphorylation sites in the activation loop, reducing BIK1 kinase activity and consequently inhibiting downstream signaling. Post-translationally, monoubiquitinated by ATL44/RHA3A and ATL45/RHA3B following phosphorylation upon the recognition of microbe-associated molecular patterns (MAMPs, e.g. flg22) by pattern recognition receptors (PRRs), then released from the FLS2/BAK1 complex and internalized dynamically into endocytic compartments followed by the activation of immune signaling.

The protein localises to the cell membrane. It localises to the endosome membrane. Its subcellular location is the nucleus. It catalyses the reaction L-seryl-[protein] + ATP = O-phospho-L-seryl-[protein] + ADP + H(+). The enzyme catalyses L-threonyl-[protein] + ATP = O-phospho-L-threonyl-[protein] + ADP + H(+). Its activity is regulated as follows. Kinase activation is repressed by the phosphatase PP2C38. In terms of biological role, plays a central role in immune responses. Required to activate the resistance responses to necrotrophic pathogens, including the regulation of defense hormone expression (e.g. jasmonic acid (JA) and salicylic acid (SA)). Phosphorylates FLS2 and BAK1. Involved in pathogen-associated molecular pattern (PAMP)-triggered immunity (PTI) signaling, including calcium signaling, and defense responses downstream of FLS2; upon PAMP recognition, first phosphorylated by FLS2 and SIK1 prior to being monoubiquitinated by ATL44/RHA3A and ATL45/RHA3B at the plasma membrane, then internalized dynamically into endocytic compartments together with FLS2. Acts additively with PBL1 in PTI defenses. Acts as a positive regulator of the PAMP flg22-induced increase of cytosolic calcium. Upon flg22 perception, phosphorylates and activates the calcium-permeable channel OSCA1.3, promoting stomatal closure. Phosphorylates the NADPH oxidase RBOHD at specific sites in a calcium-independent manner to enhance reactive oxygen species (ROS) generation upon flg22 perception. ROS production in response to flg22 controls stomatal movement and restriction of bacterial entry into leaf tissues. Seems not required for flg22-induced MAPK activation. Required for Pep1-induced defenses. Pep1 is an endogenous elicitor that potentiates PAMP-inducible plant responses. In association with PEPR1, acts downstream of the canonical ethylene signaling cascade to regulate ethylene responses. Involved in ethylene signaling. Destabilizes EIN3, the key transcription activator in ethylene signaling, and represses EIN3-dependent transcription. Acts as a negative regulator in brassinosteroid (BR) signaling. Functions in BR signaling by direct interaction with the BR receptor BRI1 cytosolic kinase domain. Required during SCOOP small peptides (e.g. SCOOP10 and SCOOP12) perception and signaling; receptor-like cytosolic kinases (RLCK) activated by BAK1/SERK3 and SERK4 coreceptors when associated with MIK2 upon the perception of SCOOP peptides. Functionally, (Microbial infection) Xanthomonas campestris effector AvrAC/XopAC-mediated uridylylation prevents activation by phosphorylation at the same residues, thus affecting immune responses and reducing defense responses toward X.campestris, mediating avrAC/XopAC virulence functions. This is Serine/threonine-protein kinase BIK1 from Arabidopsis thaliana (Mouse-ear cress).